Consider the following 925-residue polypeptide: Nonribosomal peptide synthetase apvA (925 aa).

Residues 15 to 436 (AREDSGHVVV…TGRAKENMII (422 aa)) are adenylation (A) domain. The Carrier domain occupies 564–644 (EPQNDLEKTL…DLATALEKLQ (81 aa)). An O-(pantetheine 4'-phosphoryl)serine modification is found at serine 601. The tract at residues 663-909 (PLWLVHPGAG…HYSMIGPDHV (247 aa)) is thioesterase (TE) domain.

This sequence belongs to the NRP synthetase family. ApvA specifically produces aspulvinone E in hyphea, in contrast to melA which produces aspulvinone E in conidia where it is converted to UV-protective Asp-melanin.

It carries out the reaction 2 3-(4-hydroxyphenyl)pyruvate + AH2 + 2 ATP + O2 = aspulvinone E + A + 2 AMP + CO2 + 2 diphosphate + H2O + H(+). It functions in the pathway secondary metabolite biosynthesis. Functionally, nonribosomal peptide synthetase; part of the gene cluster that mediates the biosynthesis of aspulvinones. The nonribosomal peptide synthetase apvA is responsible for the production of aspulvinone E, the core structure of aspulvinones. ApvA first activates 4-hydroxyphenylpyruvate (HPPA) through its A domain to AMP-HPPA. The HPPA unit is then loaded to the T domain and eventually transferred to the TE domain. Upon loading of another HPPA unit to the T domain, the TE domain promotes the enolate formation on the unit attached. The next step involves head to tail Claisen condensation, followed by the keto-enol tautermerization and a nucleophilic attack on the carbonyl carbon to yield the furanone partial structure. A spontaneous oxidation at the beta-carbon of the thioester might occur in aerobic condition. The TE domain then catalyzes the hydrolysis of the thioester, followed by spontaneous decarboxylation, dehydroxylation and keto-enol tautermerization to give the aspulvinone core. Aspulvinone E is highly unstable and converted to isoaspulvinone E in the presence of light. The structural diversity of the aspulvinones suggests that other tailoring enzymes are involved and have still to be identified. This is Nonribosomal peptide synthetase apvA from Aspergillus terreus (strain NIH 2624 / FGSC A1156).